The sequence spans 315 residues: Secreted mono- and diacylglycerol lipase LIP2 (315 aa).

The signal sequence occupies residues Met-1–Ala-21. A disulfide bridge connects residues Cys-68 and Cys-308. The N-linked (GlcNAc...) asparagine glycan is linked to Asn-74. Ser-182 acts as the Nucleophile in catalysis. Residue Asp-240 is part of the active site. Residue Asn-265 is glycosylated (N-linked (GlcNAc...) asparagine). His-292 is an active-site residue.

Belongs to the AB hydrolase superfamily. Lipase family. Class 3 subfamily.

It is found in the secreted. It carries out the reaction a monoacylglycerol + H2O = glycerol + a fatty acid + H(+). The enzyme catalyses a diacylglycerol + H2O = a monoacylglycerol + a fatty acid + H(+). In terms of biological role, secreted lipase involved in Dandruff and seborrheic dermatitis (D/SD) probably via lipase-mediated breakdown of sebaceous lipids and release of irritating free fatty acids. Shows activity against monoglyceride and diglyceride substrates and generates free oleic acid from the substrates mono- and diolein. Able to cleave the oleic acid from both the 1 and the 2 position of the glycerol backbone as 1,2 isomers of diolein were converted into oleic acid and glycerol. Due to an absence of fatty acid synthase genes in Malassezia species, secretory lipases are essential for the yeast to generate free fatty acids from degradation of sebum and assimilate them as lipid sources for growth. Plays an essential role at the pathogen-host interface during disease progression. Also performs the reverse reaction to build diacylglycerols from monoacylglycerols. The chain is Secreted mono- and diacylglycerol lipase LIP2 from Malassezia restricta (strain ATCC 96810 / NBRC 103918 / CBS 7877) (Seborrheic dermatitis infection agent).